Reading from the N-terminus, the 740-residue chain is Ion-translocating oxidoreductase complex subunit C (740 aa).

2 consecutive 4Fe-4S ferredoxin-type domains span residues G369 to Y397 and K407 to F436. 8 residues coordinate [4Fe-4S] cluster: C377, C380, C383, C387, C416, C419, C422, and C426. Residues K602 to K716 form a disordered region.

Belongs to the 4Fe4S bacterial-type ferredoxin family. RnfC subfamily. In terms of assembly, the complex is composed of six subunits: RsxA, RsxB, RsxC, RsxD, RsxE and RsxG. [4Fe-4S] cluster is required as a cofactor.

It localises to the cell inner membrane. In terms of biological role, part of a membrane-bound complex that couples electron transfer with translocation of ions across the membrane. Required to maintain the reduced state of SoxR. The polypeptide is Ion-translocating oxidoreductase complex subunit C (Escherichia coli (strain SE11)).